We begin with the raw amino-acid sequence, 483 residues long: Glutathione reductase (483 aa).

Position 1 is an N-acetylmethionine (methionine 1). Leucine 2 is subject to N-acetylserine. The FAD site is built by serine 33 and glycine 34. Position 33 (serine 33) interacts with glutathione. Arginine 40 lines the glutathione pocket. Positions 53, 60, 61, and 69 each coordinate FAD. A disulfide bridge links cysteine 61 with cysteine 66. Residue tyrosine 123 participates in glutathione binding. Alanine 139 provides a ligand contact to FAD. NADP(+)-binding residues include alanine 205, isoleucine 208, glutamate 211, arginine 228, and arginine 234. Threonine 243 is a binding site for glutathione. N-linked (GlcNAc...) asparagine glycosylation is present at asparagine 278. Glycine 294 is an NADP(+) binding site. Aspartate 334 contacts FAD. Glutamate 340 serves as a coordination point for NADP(+). Threonine 342 provides a ligand contact to FAD. Position 350 (arginine 350) interacts with glutathione. Valine 375 provides a ligand contact to NADP(+). Lysine 425 contacts glutathione. Histidine 472 serves as a coordination point for FAD. Catalysis depends on histidine 472, which acts as the Proton acceptor.

The protein belongs to the class-I pyridine nucleotide-disulfide oxidoreductase family. In terms of assembly, homodimer. FAD is required as a cofactor.

The protein resides in the cytoplasm. Its subcellular location is the nucleus. It localises to the mitochondrion. The protein localises to the peroxisome. It carries out the reaction 2 glutathione + NADP(+) = glutathione disulfide + NADPH + H(+). Its function is as follows. Catalyzes the reduction of glutathione disulfide (GSSG) to reduced glutathione (GSH). Constitutes the major mechanism to maintain a high GSH:GSSG ratio in the cytosol. The protein is Glutathione reductase of Saccharomyces cerevisiae (strain ATCC 204508 / S288c) (Baker's yeast).